The sequence spans 480 residues: Protein disulfide-isomerase 5-4 (480 aa).

Residues Asn74 and Asn99 are each glycosylated (N-linked (GlcNAc...) asparagine). A Thioredoxin domain is found at Phe120–Glu263. Catalysis depends on nucleophile residues Cys170 and Cys173. Cys170 and Cys173 are joined by a disulfide. 3 N-linked (GlcNAc...) asparagine glycosylation sites follow: Asn280, Asn326, and Asn376. The helical transmembrane segment at Phe439 to Ile459 threads the bilayer.

This sequence belongs to the protein disulfide isomerase family. As to expression, widely expressed.

It is found in the membrane. Functionally, acts as a protein-folding catalyst that interacts with nascent polypeptides to catalyze the formation, isomerization, and reduction or oxidation of disulfide bonds. The chain is Protein disulfide-isomerase 5-4 (PDIL5-4) from Arabidopsis thaliana (Mouse-ear cress).